Here is a 438-residue protein sequence, read N- to C-terminus: Glutamyl-tRNA reductase (438 aa).

Residues 49-52 (TCNR), S109, 114-116 (EGQ), and Q120 contribute to the substrate site. C50 functions as the Nucleophile in the catalytic mechanism. 197–202 (GAGKMS) contacts NADP(+).

This sequence belongs to the glutamyl-tRNA reductase family. Homodimer.

The catalysed reaction is (S)-4-amino-5-oxopentanoate + tRNA(Glu) + NADP(+) = L-glutamyl-tRNA(Glu) + NADPH + H(+). The protein operates within porphyrin-containing compound metabolism; protoporphyrin-IX biosynthesis; 5-aminolevulinate from L-glutamyl-tRNA(Glu): step 1/2. It functions in the pathway porphyrin-containing compound metabolism; chlorophyll biosynthesis. Catalyzes the NADPH-dependent reduction of glutamyl-tRNA(Glu) to glutamate 1-semialdehyde (GSA). This chain is Glutamyl-tRNA reductase, found in Synechococcus elongatus (strain ATCC 33912 / PCC 7942 / FACHB-805) (Anacystis nidulans R2).